A 441-amino-acid polypeptide reads, in one-letter code: Glutamyl-tRNA reductase (441 aa).

Residues 49–52, Ser-109, 114–116, and Gln-120 each bind substrate; these read TCNR and EGQ. Residue Cys-50 is the Nucleophile of the active site. 198–203 serves as a coordination point for NADP(+); it reads GAGRMS.

This sequence belongs to the glutamyl-tRNA reductase family. In terms of assembly, homodimer.

It carries out the reaction (S)-4-amino-5-oxopentanoate + tRNA(Glu) + NADP(+) = L-glutamyl-tRNA(Glu) + NADPH + H(+). Its pathway is porphyrin-containing compound metabolism; protoporphyrin-IX biosynthesis; 5-aminolevulinate from L-glutamyl-tRNA(Glu): step 1/2. It functions in the pathway porphyrin-containing compound metabolism; chlorophyll biosynthesis. Its function is as follows. Catalyzes the NADPH-dependent reduction of glutamyl-tRNA(Glu) to glutamate 1-semialdehyde (GSA). The protein is Glutamyl-tRNA reductase of Prochlorococcus marinus (strain NATL2A).